Consider the following 190-residue polypeptide: MSIKEDKWIRKMAQTHGMIEPFADGQVNIDAETGEKLISYGLSSYGYDLRLSREFKVFTNVYNSLVDPKHFTEDTFISITDDVCIIPPNSFALAHSVEYFRIPRNVLTMCIGKSTYARCGLIVNVTPFEPEWEGYVTIEISNTTPLPAKIYANEGIAQVLFFEADEMCEVSYAERKGKYQKQQGITVPFV.

113–118 (KSTYAR) serves as a coordination point for dCTP. Residue glutamate 139 is the Proton donor/acceptor of the active site. Residues glutamine 158, tyrosine 172, lysine 181, and glutamine 182 each contribute to the dCTP site.

It belongs to the dCTP deaminase family. As to quaternary structure, homotrimer.

The catalysed reaction is dCTP + H2O + H(+) = dUTP + NH4(+). Its pathway is pyrimidine metabolism; dUMP biosynthesis; dUMP from dCTP (dUTP route): step 1/2. In terms of biological role, catalyzes the deamination of dCTP to dUTP. The polypeptide is dCTP deaminase (Chlamydia felis (strain Fe/C-56) (Chlamydophila felis)).